Reading from the N-terminus, the 209-residue chain is MKELVQQLRKDTGAGVMDCKKALQEANGDVVQALNLLKKKGLAKAEQKRTRSTTNGRVESYVHAGNRLGVLLELNCETDFVAKSEPFQLLAKNLAMQIAACEQVRYIEWEQIPSSVIESVKSQVAEQLVEQLANKPVQLRSQIVEAKVKKQLQKQCLLDQPFIKDEQLTVDEVIRTTIAQVGENIRLKRFARFVLGEETGEETGEETND.

It belongs to the EF-Ts family.

Its subcellular location is the plastid. The protein localises to the chloroplast. Associates with the EF-Tu.GDP complex and induces the exchange of GDP to GTP. It remains bound to the aminoacyl-tRNA.EF-Tu.GTP complex up to the GTP hydrolysis stage on the ribosome. The protein is Elongation factor Ts, chloroplastic (tsf) of Cyanidioschyzon merolae (strain NIES-3377 / 10D) (Unicellular red alga).